The chain runs to 98 residues: uncharacterized protein (98 aa).

This is an uncharacterized protein from Thermotoga maritima (strain ATCC 43589 / DSM 3109 / JCM 10099 / NBRC 100826 / MSB8).